Here is a 554-residue protein sequence, read N- to C-terminus: Hydroxylamine reductase (554 aa).

[2Fe-2S] cluster is bound by residues Cys3, Cys6, Cys18, and Cys25. Hybrid [4Fe-2O-2S] cluster is bound by residues His252, Glu276, Cys320, Cys408, Cys436, Cys461, Glu495, and Lys497. Cys408 is subject to Cysteine persulfide.

Belongs to the HCP family. Requires [2Fe-2S] cluster as cofactor. Hybrid [4Fe-2O-2S] cluster is required as a cofactor.

The protein resides in the cytoplasm. The catalysed reaction is A + NH4(+) + H2O = hydroxylamine + AH2 + H(+). In terms of biological role, catalyzes the reduction of hydroxylamine to form NH(3) and H(2)O. This Shewanella baltica (strain OS223) protein is Hydroxylamine reductase.